The sequence spans 267 residues: uncharacterized protein (267 aa).

Residues 72 to 267 (LTENNNNNNT…EEKKKKKKKK (196 aa)) are disordered. Positions 122-145 (DSVSSSTTTTIITNNKKINNNNNN) are enriched in low complexity. Positions 159 to 175 (ENEKSVQKSKKEKESPK) are enriched in basic and acidic residues. The span at 194-218 (SESSSSSSSSSSSESSSSESESSSS) shows a compositional bias: low complexity.

This is an uncharacterized protein from Dictyostelium discoideum (Social amoeba).